A 520-amino-acid chain; its full sequence is 2-isopropylmalate synthase (520 aa).

In terms of domain architecture, Pyruvate carboxyltransferase spans 12–274 (VLIFDTTLRD…TTGIDTTQIM (263 aa)). 4 residues coordinate Mn(2+): D21, H209, H211, and N245. A regulatory domain region spans residues 398–520 (RLLSLTVIAG…RLHAQHAAAE (123 aa)).

Belongs to the alpha-IPM synthase/homocitrate synthase family. LeuA type 1 subfamily. In terms of assembly, homodimer. It depends on Mn(2+) as a cofactor.

It is found in the cytoplasm. The enzyme catalyses 3-methyl-2-oxobutanoate + acetyl-CoA + H2O = (2S)-2-isopropylmalate + CoA + H(+). The protein operates within amino-acid biosynthesis; L-leucine biosynthesis; L-leucine from 3-methyl-2-oxobutanoate: step 1/4. Catalyzes the condensation of the acetyl group of acetyl-CoA with 3-methyl-2-oxobutanoate (2-ketoisovalerate) to form 3-carboxy-3-hydroxy-4-methylpentanoate (2-isopropylmalate). This chain is 2-isopropylmalate synthase, found in Methylobacterium nodulans (strain LMG 21967 / CNCM I-2342 / ORS 2060).